We begin with the raw amino-acid sequence, 433 residues long: Serine carboxypeptidase-like 8 (433 aa).

The first 19 residues, 1–19 (MSLKIKFLLLLVLYHHVDS), serve as a signal peptide directing secretion. Cystine bridges form between C78-C323, C241-C255, and C279-C289. The N-linked (GlcNAc...) asparagine glycan is linked to N99. The active site involves S173. N283, N324, and N342 each carry an N-linked (GlcNAc...) asparagine glycan. Residues D358 and H411 contribute to the active site. N418 is a glycosylation site (N-linked (GlcNAc...) asparagine).

The protein belongs to the peptidase S10 family. In terms of processing, N-glycosylated. Highly expressed in seedlings. Expressed in leaves, stems, flowers and siliques, and at low levels in roots.

The protein localises to the vacuole. The enzyme catalyses 1-O-(trans-sinapoyl)-beta-D-glucose + (S)-malate = sinapoyl (S)-malate + D-glucose. It carries out the reaction 2 1-O-(trans-sinapoyl)-beta-D-glucose = 1,2-di-O-sinapoyl beta-D-glucose + D-glucose. 95% inhibition by diisopropyl fluorophosphate (DFP) and 30% by phenylmethylsulfonyl fluoride (PMSF). Functionally, involved in plants secondary metabolism. Functions as acyltransferase to form the sinapate ester sinapoylmalate. Also capable of catalyzing the formation of 1,2-bis-O-sinapoyl beta-D-glucoside. The chain is Serine carboxypeptidase-like 8 from Arabidopsis thaliana (Mouse-ear cress).